The following is a 419-amino-acid chain: Imidazolonepropionase (419 aa).

2 residues coordinate Fe(3+): H84 and H86. 2 residues coordinate Zn(2+): H84 and H86. The 4-imidazolone-5-propanoate site is built by R93, Y156, and H189. Y156 is a binding site for N-formimidoyl-L-glutamate. Fe(3+) is bound at residue H254. H254 serves as a coordination point for Zn(2+). Q257 provides a ligand contact to 4-imidazolone-5-propanoate. Residue D329 coordinates Fe(3+). Zn(2+) is bound at residue D329. Residues N331 and G333 each contribute to the N-formimidoyl-L-glutamate site. T334 lines the 4-imidazolone-5-propanoate pocket.

The protein belongs to the metallo-dependent hydrolases superfamily. HutI family. Monomer. Forms a tightly packed homodimer in the crystal, but this seems to be an artifact of crystallization. Zn(2+) is required as a cofactor. Fe(3+) serves as cofactor.

Its subcellular location is the cytoplasm. The catalysed reaction is 4-imidazolone-5-propanoate + H2O = N-formimidoyl-L-glutamate. Its pathway is amino-acid degradation; L-histidine degradation into L-glutamate; N-formimidoyl-L-glutamate from L-histidine: step 3/3. Its function is as follows. Catalyzes the hydrolytic cleavage of the carbon-nitrogen bond in imidazolone-5-propanoate to yield N-formimidoyl-L-glutamate. It is the third step in the universal histidine degradation pathway. In Agrobacterium fabrum (strain C58 / ATCC 33970) (Agrobacterium tumefaciens (strain C58)), this protein is Imidazolonepropionase.